The primary structure comprises 121 residues: Small ribosomal subunit protein uS13 (121 aa).

Positions 96-121 are disordered; the sequence is PVRGQNTKNNARTRKGKAVAIAGKKK. A compositionally biased stretch (basic residues) spans 106-121; that stretch reads ARTRKGKAVAIAGKKK.

It belongs to the universal ribosomal protein uS13 family. As to quaternary structure, part of the 30S ribosomal subunit. Forms a loose heterodimer with protein S19. Forms two bridges to the 50S subunit in the 70S ribosome.

Located at the top of the head of the 30S subunit, it contacts several helices of the 16S rRNA. In the 70S ribosome it contacts the 23S rRNA (bridge B1a) and protein L5 of the 50S subunit (bridge B1b), connecting the 2 subunits; these bridges are implicated in subunit movement. Contacts the tRNAs in the A and P-sites. This Streptococcus agalactiae serotype Ia (strain ATCC 27591 / A909 / CDC SS700) protein is Small ribosomal subunit protein uS13.